The following is a 384-amino-acid chain: Histidinol-phosphate aminotransferase 2 (384 aa).

Lys-236 carries the N6-(pyridoxal phosphate)lysine modification.

The protein belongs to the class-II pyridoxal-phosphate-dependent aminotransferase family. Histidinol-phosphate aminotransferase subfamily. As to quaternary structure, homodimer. Requires pyridoxal 5'-phosphate as cofactor.

The enzyme catalyses L-histidinol phosphate + 2-oxoglutarate = 3-(imidazol-4-yl)-2-oxopropyl phosphate + L-glutamate. Its pathway is amino-acid biosynthesis; L-histidine biosynthesis; L-histidine from 5-phospho-alpha-D-ribose 1-diphosphate: step 7/9. The polypeptide is Histidinol-phosphate aminotransferase 2 (hisC2) (Nostoc sp. (strain PCC 7120 / SAG 25.82 / UTEX 2576)).